The following is a 365-amino-acid chain: UDP-N-acetylglucosamine--N-acetylmuramyl-(pentapeptide) pyrophosphoryl-undecaprenol N-acetylglucosamine transferase (365 aa).

UDP-N-acetyl-alpha-D-glucosamine is bound by residues 19–21, N131, R170, S201, I255, 274–279, and Q300; these read TGG and ALTVTE.

Belongs to the glycosyltransferase 28 family. MurG subfamily.

The protein resides in the cell inner membrane. The catalysed reaction is di-trans,octa-cis-undecaprenyl diphospho-N-acetyl-alpha-D-muramoyl-L-alanyl-D-glutamyl-meso-2,6-diaminopimeloyl-D-alanyl-D-alanine + UDP-N-acetyl-alpha-D-glucosamine = di-trans,octa-cis-undecaprenyl diphospho-[N-acetyl-alpha-D-glucosaminyl-(1-&gt;4)]-N-acetyl-alpha-D-muramoyl-L-alanyl-D-glutamyl-meso-2,6-diaminopimeloyl-D-alanyl-D-alanine + UDP + H(+). Its pathway is cell wall biogenesis; peptidoglycan biosynthesis. In terms of biological role, cell wall formation. Catalyzes the transfer of a GlcNAc subunit on undecaprenyl-pyrophosphoryl-MurNAc-pentapeptide (lipid intermediate I) to form undecaprenyl-pyrophosphoryl-MurNAc-(pentapeptide)GlcNAc (lipid intermediate II). In Acinetobacter baumannii (strain ACICU), this protein is UDP-N-acetylglucosamine--N-acetylmuramyl-(pentapeptide) pyrophosphoryl-undecaprenol N-acetylglucosamine transferase.